Consider the following 205-residue polypeptide: Macrophage immunometabolism regulator (205 aa).

Positions methionine 1 to serine 40 are disordered. A compositionally biased stretch (polar residues) spans valine 8–serine 25.

The protein belongs to the UNC119-binding protein family. Interacts with unc119 family proteins; interaction preferentially takes place when unc119 proteins are unliganded with myristoylated proteins.

The protein localises to the cytoplasm. The protein resides in the cell projection. Its subcellular location is the cilium. In terms of biological role, may play a role in immune regulation through regulation of the macrophage function. May also play a role in trafficking of proteins via its interaction with unc119 family cargo adapters. May play a role in ciliary membrane localization. This chain is Macrophage immunometabolism regulator (macir), found in Xenopus tropicalis (Western clawed frog).